Reading from the N-terminus, the 209-residue chain is Ion-translocating oxidoreductase complex subunit G (209 aa).

A helical membrane pass occupies residues 9–29 (GITLALFAAGATGLTAVVNSL). T175 bears the FMN phosphoryl threonine mark.

It belongs to the RnfG family. In terms of assembly, the complex is composed of six subunits: RnfA, RnfB, RnfC, RnfD, RnfE and RnfG. The cofactor is FMN.

The protein localises to the cell inner membrane. Part of a membrane-bound complex that couples electron transfer with translocation of ions across the membrane. The sequence is that of Ion-translocating oxidoreductase complex subunit G from Yersinia pestis.